Reading from the N-terminus, the 399-residue chain is Adenylate cyclase (399 aa).

Polar residues predominate over residues M1 to S10. Residues M1–T35 are disordered. Over residues P24–E33 the composition is skewed to basic and acidic residues. Positions R198–T307 constitute a Guanylate cyclase domain. Positions 203 and 247 each coordinate Mg(2+).

It belongs to the adenylyl cyclase class-3 family. Mg(2+) serves as cofactor.

The catalysed reaction is ATP = 3',5'-cyclic AMP + diphosphate. The sequence is that of Adenylate cyclase (cya) from Streptomyces griseus.